The primary structure comprises 498 residues: Acetyl-coenzyme A carboxylase carboxyl transferase subunit beta, chloroplastic (498 aa).

Residues 228–498 enclose the CoA carboxyltransferase N-terminal domain; it reads LWVQCEICYG…LNHNLSRTLT (271 aa). 4 residues coordinate Zn(2+): Cys232, Cys235, Cys251, and Cys254. A C4-type zinc finger spans residues 232–254; sequence CEICYGLNYKKFFKSKMNICEQC.

Belongs to the AccD/PCCB family. Acetyl-CoA carboxylase is a heterohexamer composed of biotin carboxyl carrier protein, biotin carboxylase and 2 subunits each of ACCase subunit alpha and ACCase plastid-coded subunit beta (accD). The cofactor is Zn(2+).

It is found in the plastid. The protein resides in the chloroplast stroma. It catalyses the reaction N(6)-carboxybiotinyl-L-lysyl-[protein] + acetyl-CoA = N(6)-biotinyl-L-lysyl-[protein] + malonyl-CoA. It functions in the pathway lipid metabolism; malonyl-CoA biosynthesis; malonyl-CoA from acetyl-CoA: step 1/1. Its function is as follows. Component of the acetyl coenzyme A carboxylase (ACC) complex. Biotin carboxylase (BC) catalyzes the carboxylation of biotin on its carrier protein (BCCP) and then the CO(2) group is transferred by the transcarboxylase to acetyl-CoA to form malonyl-CoA. This chain is Acetyl-coenzyme A carboxylase carboxyl transferase subunit beta, chloroplastic, found in Populus alba (White poplar).